Reading from the N-terminus, the 172-residue chain is Mitochondrial import inner membrane translocase subunit Tim17-B (172 aa).

A disulfide bond links cysteine 9 and cysteine 78. The next 3 helical transmembrane spans lie at 17–37 (CGGA…IKGF), 61–77 (QIGG…STID), and 113–133 (VGSA…GILL). Residues 146 to 172 (PFLEDPSQLPPKDGTPAPGYPSYQQYH) are disordered.

Belongs to the Tim17/Tim22/Tim23 family. As to quaternary structure, component of the TIM23 complex at least composed of TIMM23, TIMM17 (TIMM17A or TIMM17B) and TIMM50. The complex interacts with the TIMM44 component of the PAM complex and with DNAJC15. Post-translationally, forms one disulfide bond. As to expression, expression is abundant in heart and skeletal muscle, intermediate in brain, and weak in pancreas, placenta, kidney and liver.

Its subcellular location is the mitochondrion inner membrane. Functionally, essential component of the TIM23 complex, a complex that mediates the translocation of transit peptide-containing proteins across the mitochondrial inner membrane. This is Mitochondrial import inner membrane translocase subunit Tim17-B (TIMM17B) from Homo sapiens (Human).